Here is a 23-residue protein sequence, read N- to C-terminus: FENKVAEKQKLFQADNGLPVXLK.

This sequence belongs to the cytochrome c oxidase VIIa family. In terms of assembly, component of the complex IV (CIV, cytochrome c oxidase), a multisubunit enzyme composed of 14 subunits. The complex is composed of a catalytic core of 3 subunits MT-CO1, MT-CO2 and MT-CO3, encoded in the mitochondrial DNA, and 11 supernumerary subunits COX4I1 (or COX4I2), COX5A, COX5B, COX6A2 (or COX6A1), COX6B1 (or COX6B2), COX6C, COX7A1 (or COX7A2), COX7B, COX7C, COX8B and NDUFA4, which are encoded in the nuclear genome. The complex exists as a monomer or a dimer and forms supercomplexes (SCs) in the inner mitochondrial membrane with NADH-ubiquinone oxidoreductase (complex I, CI) and ubiquinol-cytochrome c oxidoreductase (cytochrome b-c1 complex, complex III, CIII), resulting in different assemblies (supercomplex SCI(1)III(2)IV(1) and megacomplex MCI(2)III(2)IV(2)).

The protein resides in the mitochondrion inner membrane. It functions in the pathway energy metabolism; oxidative phosphorylation. Its function is as follows. Component of the mitochondrial respiratory complex IV (CIV, also named cytochrome c oxidase complex), the last enzyme in the mitochondrial electron transport chain which drives oxidative phosphorylation. The CIV complex is the component of the respiratory chain that catalyzes the reduction of oxygen to water. Acts as an assembly factor that specifically drives the homodimerization of CIV complexes, mediating the formation of mitochondrial respiratory supercomplexes (respirasomes) containing two CIV: supercomplxes with two molecules of CIV show improved activity. Despite being highly expressed in brown adipose tissue, not required for thermogenesis. In Canis lupus familiaris (Dog), this protein is Cytochrome c oxidase subunit 7A1, mitochondrial (COX7A1).